Here is a 240-residue protein sequence, read N- to C-terminus: Probable septum site-determining protein MinC (240 aa).

It belongs to the MinC family. In terms of assembly, interacts with MinD and FtsZ.

Its function is as follows. Cell division inhibitor that blocks the formation of polar Z ring septums. Rapidly oscillates between the poles of the cell to destabilize FtsZ filaments that have formed before they mature into polar Z rings. Prevents FtsZ polymerization. This is Probable septum site-determining protein MinC from Chromobacterium violaceum (strain ATCC 12472 / DSM 30191 / JCM 1249 / CCUG 213 / NBRC 12614 / NCIMB 9131 / NCTC 9757 / MK).